The primary structure comprises 151 residues: Large ribosomal subunit protein uL15 (151 aa).

Residues 1 to 45 (MNLSSLKPVKGSTKTCKRVGRGQGSGCGGTSTRGHKGQKSRSGYS) are disordered. The segment covering 21–31 (RGQGSGCGGTS) has biased composition (gly residues).

It belongs to the universal ribosomal protein uL15 family. As to quaternary structure, part of the 50S ribosomal subunit.

Functionally, binds to the 23S rRNA. In Azobacteroides pseudotrichonymphae genomovar. CFP2, this protein is Large ribosomal subunit protein uL15.